The following is a 164-amino-acid chain: Thiol peroxidase (164 aa).

The region spanning leucine 16–valine 162 is the Thioredoxin domain. The active-site Cysteine sulfenic acid (-SOH) intermediate is the cysteine 58. Cysteine 58 and cysteine 92 are oxidised to a cystine.

It belongs to the peroxiredoxin family. Tpx subfamily. In terms of assembly, homodimer.

The enzyme catalyses a hydroperoxide + [thioredoxin]-dithiol = an alcohol + [thioredoxin]-disulfide + H2O. In terms of biological role, thiol-specific peroxidase that catalyzes the reduction of hydrogen peroxide and organic hydroperoxides to water and alcohols, respectively. Plays a role in cell protection against oxidative stress by detoxifying peroxides. In Streptococcus parasanguinis, this protein is Thiol peroxidase.